The sequence spans 62 residues: Potassium channel toxin alpha-KTx 6.21 (62 aa).

Residues 1 to 24 form the signal peptide; it reads MNAKLIYLLLVVTTMMLTFDTTQA. 4 disulfide bridges follow: Cys-29–Cys-50, Cys-35–Cys-55, Cys-39–Cys-57, and Cys-45–Cys-60. Valine amide is present on Val-61.

It belongs to the short scorpion toxin superfamily. Potassium channel inhibitor family. Alpha-KTx 06 subfamily. Post-translationally, C-terminal amidation is important for activity. There is a 50-70-fold decrease in ability to inhibit Kv1.2/KCNA2 when the toxin is not amidated. This decrease may be explained by a 23-fold slower association rate (k(on)) together with a 2-fold faster dissociation rate (k(off)). In terms of tissue distribution, expressed by the venom gland.

It localises to the secreted. In terms of biological role, reversible blocker of voltage-gated potassium channels with fast binding and unbinding kinetics. Has highest activity on human voltage-gated potassium channel Kv1.2/KCNA2 channels (IC(50)=0.11-0.16 nM), whereas its affinity for other channels tested was in the nanomolar range (hKv1.1/KCNA1, IC(50)=253 nM; hKv1.3/KCNA3, IC(50)=91 nM; and hKCa3.1/KCNN4, IC(50)=70 nM). In Urodacus yaschenkoi (Inland robust scorpion), this protein is Potassium channel toxin alpha-KTx 6.21.